The sequence spans 275 residues: NH(3)-dependent NAD(+) synthetase (275 aa).

G46–S53 provides a ligand contact to ATP. Residue D52 coordinates Mg(2+). Deamido-NAD(+) is bound at residue R140. T160 is a binding site for ATP. E165 serves as a coordination point for Mg(2+). The deamido-NAD(+) site is built by K173 and D180. ATP contacts are provided by K189 and T211. Residue H260–K261 coordinates deamido-NAD(+).

It belongs to the NAD synthetase family. As to quaternary structure, homodimer.

The enzyme catalyses deamido-NAD(+) + NH4(+) + ATP = AMP + diphosphate + NAD(+) + H(+). Its pathway is cofactor biosynthesis; NAD(+) biosynthesis; NAD(+) from deamido-NAD(+) (ammonia route): step 1/1. Catalyzes the ATP-dependent amidation of deamido-NAD to form NAD. Uses ammonia as a nitrogen source. This chain is NH(3)-dependent NAD(+) synthetase, found in Shigella flexneri serotype 5b (strain 8401).